Reading from the N-terminus, the 71-residue chain is uncharacterized protein (71 aa).

It is found in the plastid. The protein localises to the chloroplast. This is an uncharacterized protein from Mesostigma viride (Green alga).